Here is an 875-residue protein sequence, read N- to C-terminus: DNA topoisomerase 3-beta (875 aa).

Residues 3–153 form the Toprim domain; that stretch reads SVLMVAEKPS…QVTYRAHFSA (151 aa). In terms of domain architecture, Topo IA-type catalytic spans 170 to 589; it reads NENEAKSVDA…AIKIFKLKFM (420 aa). Tyr332 acts as the O-(5'-phospho-DNA)-tyrosine intermediate in catalysis. Positions 371 to 391 are disordered; the sequence is QTPRKGKDAGDHPPITPMKLG.

It belongs to the type IA topoisomerase family.

The catalysed reaction is ATP-independent breakage of single-stranded DNA, followed by passage and rejoining.. Releases the supercoiling and torsional tension of DNA introduced during the DNA replication and transcription by transiently cleaving and rejoining one strand of the DNA duplex. Introduces a single-strand break via transesterification at a target site in duplex DNA. The scissile phosphodiester is attacked by the catalytic tyrosine of the enzyme, resulting in the formation of a DNA-(5'-phosphotyrosyl)-enzyme intermediate and the expulsion of a 3'-OH DNA strand. The free DNA strand than undergoes passage around the unbroken strand thus removing DNA supercoils. Finally, in the religation step, the DNA 3'-OH attacks the covalent intermediate to expel the active-site tyrosine and restore the DNA phosphodiester backbone. Weakly relaxes negative supercoils and displays a distinct preference for binding single-stranded DNA. This Drosophila melanogaster (Fruit fly) protein is DNA topoisomerase 3-beta (Top3beta).